Reading from the N-terminus, the 203-residue chain is V-type ATP synthase subunit D (203 aa).

It belongs to the V-ATPase D subunit family.

Produces ATP from ADP in the presence of a proton gradient across the membrane. The protein is V-type ATP synthase subunit D of Streptococcus pneumoniae (strain Hungary19A-6).